The following is a 206-amino-acid chain: Oligoribonuclease (206 aa).

Residues 20-183 (LVWLDMEMTG…ADIHESIDEL (164 aa)) form the Exonuclease domain. The active site involves tyrosine 141.

This sequence belongs to the oligoribonuclease family.

The protein localises to the cytoplasm. Its function is as follows. 3'-to-5' exoribonuclease specific for small oligoribonucleotides. In Burkholderia lata (strain ATCC 17760 / DSM 23089 / LMG 22485 / NCIMB 9086 / R18194 / 383), this protein is Oligoribonuclease.